Here is a 1150-residue protein sequence, read N- to C-terminus: Apomucin (1150 aa).

Composition is skewed to low complexity over residues 1-36 (ETAR…TGAS) and 46-79 (SVAG…SSVG). 5 tandem repeats follow at residues 1–44 (ETAR…ETSR), 45–125 (ISVA…ETSR), 126–206 (ISVA…ETSR), 207–287 (ISVA…ETSR), and 288–368 (ISVA…ETSR). Positions 1–368 (ETARPSVAGS…ASIGQPETSR (368 aa)) are 6 X 81 AA tandem repeats. Disordered stretches follow at residues 1 to 730 (ETAR…KTGI) and 776 to 925 (APGS…PAPL). Ser-46, Ser-50, Ser-51, Ser-57, Ser-58, and Ser-61 each carry an O-linked (GalNAc...) serine; partial glycan. The O-linked (GalNAc...) threonine; partial glycan is linked to Thr-66. Ser-67 carries O-linked (GalNAc...) serine; partial glycosylation. Thr-73 and Thr-74 each carry an O-linked (GalNAc...) threonine; partial glycan. O-linked (GalNAc...) serine; partial glycans are attached at residues Ser-76 and Ser-77. Thr-81 and Thr-83 each carry an O-linked (GalNAc...) threonine; partial glycan. Low complexity predominate over residues 86–117 (PSVAGSGTTGTVSGASGSTGSSSGSPGATGAS). 2 O-linked (GalNAc...) serine; partial glycosylation sites follow: Ser-87 and Ser-91. Thr-93, Thr-94, and Thr-96 each carry an O-linked (GalNAc...) threonine; partial glycan. Ser-98, Ser-101, and Ser-103 each carry an O-linked (GalNAc...) serine; partial glycan. Thr-104 carries an O-linked (GalNAc...) threonine; partial glycan. Residues Ser-106, Ser-107, Ser-108, and Ser-110 are each glycosylated (O-linked (GalNAc...) serine; partial). Thr-114 is a glycosylation site (O-linked (GalNAc...) threonine; partial). Residue Ser-117 is glycosylated (O-linked (GalNAc...) serine; partial). O-linked (GalNAc...) threonine; partial glycosylation occurs at Thr-123. Ser-124 is a glycosylation site (O-linked (GalNAc...) serine; partial). Composition is skewed to low complexity over residues 127–160 (SVAG…SSVG), 167–198 (PSVA…TGAS), 208–241 (SVAG…SSVG), 248–279 (PSVA…TGAS), 289–322 (SVAG…SSVG), 329–360 (PSVA…TGAS), and 370–396 (SVAG…ATTS). The stretch at 369-391 (ISVAGSSGAPAVSSGASQAAGTS) is one 6; truncated repeat. N-linked (GlcNAc...) asparagine glycosylation is present at Asn-418. Positions 442-459 (SYNTEATTSIGRSGTTHT) are enriched in polar residues. Residues 473 to 506 (SHSSQSSKPGSSVTTPGSPESGSETGTSGEFSTT) are compositionally biased toward low complexity. 2 stretches are compositionally biased toward polar residues: residues 507 to 517 (VISGSSHTEAT) and 537 to 547 (ELSGTTIASGN). N-linked (GlcNAc...) asparagine glycosylation is present at Asn-547. Positions 548–558 (ATTEATTSTET) are enriched in low complexity. Positions 564–586 (TGAQTTVPGSQVSGSETGTSEAV) are enriched in polar residues. The segment covering 590 to 625 (AIASGSSSTGTTSGASDSQVTGSRTGTTGVVLGTTV) has biased composition (low complexity). 2 stretches are compositionally biased toward polar residues: residues 626–635 (APGSSSTGAT) and 643–661 (GTRS…TTYE). Positions 671 to 682 (GGSGTPGSGINT) are enriched in gly residues. Composition is skewed to polar residues over residues 688–697 (QVTGIQTGTT), 706–729 (LPGS…SKTG), and 779–788 (SFNTKATTPT). A compositionally biased stretch (low complexity) spans 790–833 (VRAATGAGTAVGATSRSTGISTGPENSTPGTTETGSGTTSSPGG). Residues 875-908 (ETTTAPRISATGSTSVSKEITASPKVSSPETTAG) are compositionally biased toward polar residues. Residues Asn-917, Asn-985, Asn-1002, and Asn-1068 are each glycosylated (N-linked (GlcNAc...) asparagine). The region spanning 929 to 995 (PVCHGPLGEE…DTCCEIGHCE (67 aa)) is the VWFC domain. Intrachain disulfides connect Cys-1062–Cys-1109, Cys-1076–Cys-1123, Cys-1085–Cys-1139, and Cys-1089–Cys-1141. The region spanning 1062–1146 (CKPSPVNVTV…TACSCLDPCQ (85 aa)) is the CTCK domain.

As to quaternary structure, intermolecular disulfide bonds could help maintain a multimeric mucin structure. In terms of processing, extensively O-glycosylated on most but not all Ser and Thr residues of the repeat units. Highest glycosylation appears to occur on Ser residues which have Gly at positions at +2 or -2 from the glycosylation site or, where Gly is the penultimate residue. The presence of proline (usually at position +3 or -3) appears to also enhance glycosylation. As to expression, submaxillary mucosae.

The protein localises to the secreted. Apomucin is part of mucin, the major glycoprotein synthesized and secreted by mucous cells of the submaxillary gland. Its highly viscous aqueous solutions serve to lubricate the oral cavity and to protect it from the external environment. The polypeptide is Apomucin (Sus scrofa (Pig)).